The primary structure comprises 243 residues: BTB/POZ domain-containing protein At4g08455 (243 aa).

Positions 19–51 (KECYVEAGETEEELKREIDDLKAKVAFLRLSSS) form a coiled coil. The 73-residue stretch at 64–136 (TDVVLIASED…LYTAEACLDE (73 aa)) folds into the BTB domain.

As to quaternary structure, interacts with CUL3A and CUL3B.

The protein operates within protein modification; protein ubiquitination. May act as a substrate-specific adapter of an E3 ubiquitin-protein ligase complex (CUL3-RBX1-BTB) which mediates the ubiquitination and subsequent proteasomal degradation of target proteins. This Arabidopsis thaliana (Mouse-ear cress) protein is BTB/POZ domain-containing protein At4g08455.